A 173-amino-acid chain; its full sequence is Photosystem I assembly protein Ycf3 (173 aa).

TPR repeat units lie at residues Ala-35–Ser-68, Ser-72–Gln-105, and Gly-120–Gly-153.

This sequence belongs to the Ycf3 family.

It is found in the cellular thylakoid membrane. Functionally, essential for the assembly of the photosystem I (PSI) complex. May act as a chaperone-like factor to guide the assembly of the PSI subunits. The protein is Photosystem I assembly protein Ycf3 of Synechococcus sp. (strain CC9605).